A 428-amino-acid chain; its full sequence is Dihydroorotase (428 aa).

Zn(2+)-binding residues include His-59 and His-61. Substrate is bound by residues 61 to 63 and Asn-93; that span reads HLR. Zn(2+)-binding residues include Asp-151, His-178, and His-231. Position 277 (Asn-277) interacts with substrate. A Zn(2+)-binding site is contributed by Asp-304. The active site involves Asp-304. Substrate contacts are provided by residues His-308 and 322-323; that span reads FG.

It belongs to the metallo-dependent hydrolases superfamily. DHOase family. Class I DHOase subfamily. The cofactor is Zn(2+).

The enzyme catalyses (S)-dihydroorotate + H2O = N-carbamoyl-L-aspartate + H(+). Its pathway is pyrimidine metabolism; UMP biosynthesis via de novo pathway; (S)-dihydroorotate from bicarbonate: step 3/3. Functionally, catalyzes the reversible cyclization of carbamoyl aspartate to dihydroorotate. In Bacillus pumilus (strain SAFR-032), this protein is Dihydroorotase.